Consider the following 510-residue polypeptide: GMP synthase [glutamine-hydrolyzing] (510 aa).

Positions 5–195 (LVLVVDFGGQ…LFNVCNLKGD (191 aa)) constitute a Glutamine amidotransferase type-1 domain. Cys-82 acts as the Nucleophile in catalysis. Active-site residues include His-169 and Glu-171. In terms of domain architecture, GMPS ATP-PPase spans 196-385 (WSMSSFAEQQ…LGIPHKLVWR (190 aa)). 223–229 (SGGVDSS) contributes to the ATP binding site.

Homodimer.

The catalysed reaction is XMP + L-glutamine + ATP + H2O = GMP + L-glutamate + AMP + diphosphate + 2 H(+). It participates in purine metabolism; GMP biosynthesis; GMP from XMP (L-Gln route): step 1/1. Functionally, catalyzes the synthesis of GMP from XMP. In Clostridium botulinum (strain Okra / Type B1), this protein is GMP synthase [glutamine-hydrolyzing].